The following is a 313-amino-acid chain: Probable 5-dehydro-4-deoxyglucarate dehydratase 1 (313 aa).

Belongs to the DapA family.

The catalysed reaction is 5-dehydro-4-deoxy-D-glucarate + H(+) = 2,5-dioxopentanoate + CO2 + H2O. It participates in carbohydrate acid metabolism; D-glucarate degradation; 2,5-dioxopentanoate from D-glucarate: step 2/2. This Streptomyces avermitilis (strain ATCC 31267 / DSM 46492 / JCM 5070 / NBRC 14893 / NCIMB 12804 / NRRL 8165 / MA-4680) protein is Probable 5-dehydro-4-deoxyglucarate dehydratase 1.